Here is a 426-residue protein sequence, read N- to C-terminus: MTISEELFSRAQQHIPGGVNSPVRAFRGVGGAPVFFSKGEGAYLYDEDGKRYIDYVGSWGPMILGHAHPDVRQALERQLANGLGFGAPTRIEIDMAEKVCELVPSIEMVRMVNSGTEATMSAIRLARGFTGRDKIVKFEGCYHGHADSLLVKAGSGALTLGIPDSPGVPASVAEHTLTLTYNDAIMVREVFARHGDEIAAIIVEPVAGNMNCIPPEPGFLETLRAVCDEHGSLLIFDEVMTGFRVALGGAQQVYGVKPDLTTLGKVIGAGLPVGAFGGRRDVMSHIAPLGPVYQAGTLSGNPLAMACGLTMLNKISEPGFYDALAAKTEALAKGLQERAQAAGVPLTINQVGGMFGFFFSEEKKVSRFEQVTRCDLERFRKFYHGMLDKGVYLAPSAYEAGFVSAAHSDEDIQATLDAASSLFASM.

Lys265 is modified (N6-(pyridoxal phosphate)lysine).

The protein belongs to the class-III pyridoxal-phosphate-dependent aminotransferase family. HemL subfamily. As to quaternary structure, homodimer. The cofactor is pyridoxal 5'-phosphate.

It is found in the cytoplasm. It catalyses the reaction (S)-4-amino-5-oxopentanoate = 5-aminolevulinate. It functions in the pathway porphyrin-containing compound metabolism; protoporphyrin-IX biosynthesis; 5-aminolevulinate from L-glutamyl-tRNA(Glu): step 2/2. This Hahella chejuensis (strain KCTC 2396) protein is Glutamate-1-semialdehyde 2,1-aminomutase.